The chain runs to 259 residues: Thiazole synthase (259 aa).

Lys95 serves as the catalytic Schiff-base intermediate with DXP. 1-deoxy-D-xylulose 5-phosphate-binding positions include Gly156, 182 to 183, and 204 to 205; these read AG and NT.

Belongs to the ThiG family. Homotetramer. Forms heterodimers with either ThiH or ThiS.

The protein localises to the cytoplasm. It carries out the reaction [ThiS sulfur-carrier protein]-C-terminal-Gly-aminoethanethioate + 2-iminoacetate + 1-deoxy-D-xylulose 5-phosphate = [ThiS sulfur-carrier protein]-C-terminal Gly-Gly + 2-[(2R,5Z)-2-carboxy-4-methylthiazol-5(2H)-ylidene]ethyl phosphate + 2 H2O + H(+). It participates in cofactor biosynthesis; thiamine diphosphate biosynthesis. Catalyzes the rearrangement of 1-deoxy-D-xylulose 5-phosphate (DXP) to produce the thiazole phosphate moiety of thiamine. Sulfur is provided by the thiocarboxylate moiety of the carrier protein ThiS. In vitro, sulfur can be provided by H(2)S. This is Thiazole synthase from Serratia proteamaculans (strain 568).